Here is a 137-residue protein sequence, read N- to C-terminus: Proofreading thioesterase EntH (137 aa).

The Nucleophile or proton acceptor role is filled by Glu-63.

This sequence belongs to the thioesterase PaaI family. As to quaternary structure, homotetramer. Dimer of dimers. Interacts specifically with the aryl carrier protein (ArCP) domain of EntB.

It localises to the cytoplasm. The protein operates within siderophore biosynthesis; enterobactin biosynthesis. Required for optimal enterobactin synthesis. Acts as a proofreading enzyme that prevents EntB misacylation by hydrolyzing the thioester bound existing between EntB and wrongly charged molecules. The protein is Proofreading thioesterase EntH of Enterobacter lignolyticus (strain SCF1).